A 253-amino-acid polypeptide reads, in one-letter code: Blue-light photoreceptor (253 aa).

Residues 6–79 (QFDVILKALN…AKIRHAINEK (74 aa)) enclose the PAS domain. Position 56 is an S-4a-FMN cysteine (Cys56). One can recognise a PAC domain in the interval 80-133 (STANVLLKNYRKDGTSFMNELTIEPIYDDHEHLYFVGIQKDVTTEHDYQLELEK). Residues 142 to 253 (STPIVPIKEN…STIKEALQFY (112 aa)) enclose the STAS domain.

FMN binds covalently to cysteine after exposure to blue light and this bond is spontaneously broken in the dark.

Exhibits the same spectroscopical features and blue-light induced photochemistry as plants phototropins, with the reversible formation of a blue-shifted photoproduct, assigned to an FMN-cysteine thiol adduct. Positive regulator in the activation of the general stress transcription factor sigma-B. The chain is Blue-light photoreceptor from Listeria monocytogenes serovar 1/2a (strain ATCC BAA-679 / EGD-e).